Here is a 353-residue protein sequence, read N- to C-terminus: Stearoyl-CoA desaturase 4 (353 aa).

The tract at residues 1–42 (MTAHLPQEISSRCSTTNIMEPHSRRQQDGEEKMPLQAEDIRP) is disordered. The Cytoplasmic segment spans residues 1–66 (MTAHLPQEIS…EGPPPKLEYV (66 aa)). Residues 8–18 (EISSRCSTTNI) are compositionally biased toward polar residues. Residues 21–42 (PHSRRQQDGEEKMPLQAEDIRP) show a composition bias toward basic and acidic residues. Residues 67–87 (WRNIIFMALLHVGALYGITLV) traverse the membrane as a helical segment. N69 serves as a coordination point for substrate. Residues 88-91 (PSCK) lie on the Lumenal side of the membrane. The helical transmembrane segment at 92–112 (VYTWLLGVFYNVVAGLGITAG) threads the bilayer. The Cytoplasmic portion of the chain corresponds to 113–211 (AHRLWSHRTY…EKLVMFQRRY (99 aa)). Positions 114 and 119 each coordinate Fe cation. Positions 114-119 (HRLWSH) match the Histidine box-1 motif. Residues N142, R149, and D150 each coordinate substrate. Positions 151, 154, and 155 each coordinate Fe cation. The short motif at 151–155 (HRAHH) is the Histidine box-2 element. 2 residues coordinate substrate: R182 and K183. A helical membrane pass occupies residues 212–231 (YKLAVTLMFIILPTLVPWYL). At 232-235 (WGET) the chain is on the lumenal side. The helical transmembrane segment at 236 to 257 (FQHSLCVSNFLRYAVLLNFTWL) threads the bilayer. W256 is a binding site for substrate. Residues 258–353 (VNSAAHLYGY…RTGDGSHKSS (96 aa)) lie on the Cytoplasmic side of the membrane. Fe cation-binding residues include H263, H292, H295, and H296. The short motif at 292 to 296 (HNYHH) is the Histidine box-3 element.

This sequence belongs to the fatty acid desaturase type 1 family. Fe(2+) is required as a cofactor. Detected in heart, but not in brain, liver, skin or adipose tissue.

It is found in the endoplasmic reticulum membrane. It localises to the microsome membrane. It catalyses the reaction octadecanoyl-CoA + 2 Fe(II)-[cytochrome b5] + O2 + 2 H(+) = (9Z)-octadecenoyl-CoA + 2 Fe(III)-[cytochrome b5] + 2 H2O. The catalysed reaction is hexadecanoyl-CoA + 2 Fe(II)-[cytochrome b5] + O2 + 2 H(+) = (9Z)-hexadecenoyl-CoA + 2 Fe(III)-[cytochrome b5] + 2 H2O. Functionally, stearoyl-CoA desaturase that utilizes O(2) and electrons from reduced cytochrome b5 to introduce the first double bond into saturated fatty acyl-CoA substrates. Catalyzes the insertion of a cis double bond at the delta-9 position into fatty acyl-CoA substrates including palmitoyl-CoA and stearoyl-CoA. Required for the biosynthesis of membrane phospholipids, cholesterol esters and triglycerides. This is Stearoyl-CoA desaturase 4 from Mus musculus (Mouse).